The following is a 203-amino-acid chain: Endo-type membrane-bound lytic murein transglycosylase A (203 aa).

Residues 1-15 (MKLRWFAFLIVLLAG) form the signal peptide. A lipid anchor (N-palmitoyl cysteine) is attached at Cys16. Cys16 is lipidated: S-diacylglycerol cysteine.

The protein belongs to the transglycosylase Slt family.

It is found in the cell outer membrane. The catalysed reaction is Endolytic cleavage of the (1-&gt;4)-beta-glycosidic linkage between N-acetylmuramic acid (MurNAc) and N-acetylglucosamine (GlcNAc) residues in peptidoglycan with concomitant formation of a 1,6-anhydrobond in the MurNAc residue.. Functionally, murein-degrading enzyme. May play a role in recycling of muropeptides during cell elongation and/or cell division. Preferentially cleaves at a distance of more than two disaccharide units from the ends of the glycan chain. The protein is Endo-type membrane-bound lytic murein transglycosylase A of Shigella boydii serotype 4 (strain Sb227).